We begin with the raw amino-acid sequence, 145 residues long: UPF0735 ACT domain-containing protein CKL_0858 (145 aa).

The region spanning 69–144 (TLGLTLAHKA…SVIKVNLAAV (76 aa)) is the ACT domain.

Belongs to the UPF0735 family.

The sequence is that of UPF0735 ACT domain-containing protein CKL_0858 from Clostridium kluyveri (strain ATCC 8527 / DSM 555 / NBRC 12016 / NCIMB 10680 / K1).